A 305-amino-acid chain; its full sequence is Carbamate kinase (305 aa).

It belongs to the carbamate kinase family.

The protein resides in the cytoplasm. The enzyme catalyses hydrogencarbonate + NH4(+) + ATP = carbamoyl phosphate + ADP + H2O + H(+). It participates in metabolic intermediate metabolism; carbamoyl phosphate degradation; CO(2) and NH(3) from carbamoyl phosphate: step 1/1. This Thermoplasma acidophilum (strain ATCC 25905 / DSM 1728 / JCM 9062 / NBRC 15155 / AMRC-C165) protein is Carbamate kinase (arcC).